The following is a 420-amino-acid chain: Histidine--tRNA ligase (420 aa).

It belongs to the class-II aminoacyl-tRNA synthetase family. Homodimer.

The protein localises to the cytoplasm. The catalysed reaction is tRNA(His) + L-histidine + ATP = L-histidyl-tRNA(His) + AMP + diphosphate + H(+). The sequence is that of Histidine--tRNA ligase from Clostridioides difficile (strain 630) (Peptoclostridium difficile).